Consider the following 522-residue polypeptide: FAD-dependent monooxygenase fsr3 (522 aa).

Positions 1-27 are disordered; sequence MKNTQTNGTHPIIDKKPNGTLNGDHQE. Arg164 provides a ligand contact to FAD. Arg245 is an active-site residue. FAD-binding residues include Asp369 and Ala382.

This sequence belongs to the paxM FAD-dependent monooxygenase family. It depends on FAD as a cofactor.

It functions in the pathway polyketide biosynthesis. In terms of biological role, FAD-dependent monooxygenase; part of the gene cluster that mediates the biosynthesis of fusarubins, highly pigmented naphthoquinones responsible for the coloration of the fruiting bodies. The non-reducing polyketide synthase FSR1 is responsible for the condensation of seven acetyl-CoA units to yield a haptaketide. After rings A and B are formed by aldol-type cyclization, the PKS-derived product is released as 6-O-demethylfusarubinaldehyde. Then, two hydroxyl groups at C-5 and C-10 are incorporated by FSR3, and simultaneously hydroxyl groups at C-6 and C-8 are methylated by FSR2. The aldehyde is, on the one hand, reduced by FSR3 to 8-O-methylfusarubin alcohol, which equilibrates mainly with 8-O-methylfusarubin and only small amounts of 8-O-methylnectriafurone. On the other hand, the aldehyde can be oxidized to form 8-O-methylfusarubinic acid, a reaction driven by FSR3 equilibrating with 8-O-methylfusarubinlactone, finally resulting in 8-O-methylanhydrofusarubinlactol after a further reduction step and loss of water. 8-O-Methylfusarubinic acid can also undergo decarboxylation, resulting in 8-O-methyl-13-hydroxynorjavanicin after another hydroxylation step at C-13. Both steps are most likely also accomplished by FSR3. No enzymatic function has been determined so far for either FSR4 and FSR5. Their deletion does not alter the product spectrum, but the possibility that they catalyze specific enzymatic steps during perithecium development cannot be ruled out. FSR4 might possess a regulatory function in the biosynthesis of fusarubins. The chain is FAD-dependent monooxygenase fsr3 from Gibberella fujikuroi (strain CBS 195.34 / IMI 58289 / NRRL A-6831) (Bakanae and foot rot disease fungus).